A 262-amino-acid polypeptide reads, in one-letter code: Flap endonuclease Xni (262 aa).

A Mg(2+)-binding site is contributed by D105. The 5'-3' exonuclease domain occupies 162–259 (ERSQFLDLMA…VIDSQPEKTI (98 aa)). K(+) contacts are provided by L172, A173, P181, I183, and I186. The tract at residues 185 to 190 (GIGPKS) is interaction with DNA.

This sequence belongs to the Xni family. Mg(2+) serves as cofactor. It depends on K(+) as a cofactor.

Has flap endonuclease activity. During DNA replication, flap endonucleases cleave the 5'-overhanging flap structure that is generated by displacement synthesis when DNA polymerase encounters the 5'-end of a downstream Okazaki fragment. The chain is Flap endonuclease Xni from Shewanella baltica (strain OS185).